Here is a 217-residue protein sequence, read N- to C-terminus: MSGIRADGTGDVGLIIAVKRLSAAKTRLAPVFSAAARESVVLAMLMDTLTAAARVGDLRSITVITPDESAAAAATELGAEVLADPTRQGDPDPLNNAILTAEQVVSGSVPNIVVLQGDLPAMQTQELADAICAARAHQRSFVADRLGTGTAALCAFGSALDPQFGPDSSAQHRRSGAVELTGAWPGLRCDVDTPADLAAARSLGVGPATARVVAHHR.

Thr-150, Gly-165, and Ser-168 together coordinate phosphoenolpyruvate.

The protein belongs to the CofC family.

It carries out the reaction phosphoenolpyruvate + GTP + H(+) = enolpyruvoyl-2-diphospho-5'-guanosine + diphosphate. The protein operates within cofactor biosynthesis; coenzyme F420 biosynthesis. Guanylyltransferase that catalyzes the activation of phosphoenolpyruvate (PEP) as enolpyruvoyl-2-diphospho-5'-guanosine, via the condensation of PEP with GTP. It is involved in the biosynthesis of coenzyme F420, a hydride carrier cofactor. The polypeptide is Phosphoenolpyruvate guanylyltransferase (Mycobacterium ulcerans (strain Agy99)).